An 88-amino-acid chain; its full sequence is Small ribosomal subunit protein uS17 (88 aa).

It belongs to the universal ribosomal protein uS17 family. In terms of assembly, part of the 30S ribosomal subunit.

In terms of biological role, one of the primary rRNA binding proteins, it binds specifically to the 5'-end of 16S ribosomal RNA. This Maridesulfovibrio salexigens (strain ATCC 14822 / DSM 2638 / NCIMB 8403 / VKM B-1763) (Desulfovibrio salexigens) protein is Small ribosomal subunit protein uS17.